A 72-amino-acid polypeptide reads, in one-letter code: UPF0154 protein LBA1278 (72 aa).

Residues Leu-3 to Tyr-23 traverse the membrane as a helical segment.

It belongs to the UPF0154 family.

The protein localises to the cell membrane. The protein is UPF0154 protein LBA1278 of Lactobacillus acidophilus (strain ATCC 700396 / NCK56 / N2 / NCFM).